A 196-amino-acid polypeptide reads, in one-letter code: Protein TEX261 (196 aa).

5 consecutive transmembrane segments (helical) span residues 3 to 23 (FMYVLSWLSLFIQVAFITLAV), 42 to 62 (SRIIKYMIWFSTAVLIGLYVF), 70 to 90 (IGVGLFTNLVYFGLLQTFPFI), 97 to 117 (FILSCGLVVVNHYLAFQFFAE), and 125 to 145 (VLAYFTFCLWIIPFAFFVSLS).

Belongs to the SVP26 family. As to expression, detected in testis.

The protein resides in the membrane. This Mus musculus (Mouse) protein is Protein TEX261 (Tex261).